The chain runs to 592 residues: Arginine--tRNA ligase (592 aa).

Residues 131 to 141 (ANPTGPMHVGH) carry the 'HIGH' region motif.

It belongs to the class-I aminoacyl-tRNA synthetase family. In terms of assembly, monomer.

It localises to the cytoplasm. The catalysed reaction is tRNA(Arg) + L-arginine + ATP = L-arginyl-tRNA(Arg) + AMP + diphosphate. This is Arginine--tRNA ligase from Rhodospirillum rubrum (strain ATCC 11170 / ATH 1.1.1 / DSM 467 / LMG 4362 / NCIMB 8255 / S1).